The primary structure comprises 1157 residues: ATP-dependent helicase/deoxyribonuclease subunit B (1157 aa).

Residues 1-277 (MTLQIIAGKA…KILLENKRAN (277 aa)) enclose the UvrD-like helicase ATP-binding domain. 8–15 (GKAGTGKT) contributes to the ATP binding site. The UvrD-like helicase C-terminal domain occupies 271-590 (LENKRANSDS…VLADMENAKL (320 aa)). 4 residues coordinate [4Fe-4S] cluster: cysteine 794, cysteine 1115, cysteine 1118, and cysteine 1124.

This sequence belongs to the helicase family. AddB/RexB type 1 subfamily. In terms of assembly, heterodimer of AddA and AddB. Mg(2+) is required as a cofactor. The cofactor is [4Fe-4S] cluster.

In terms of biological role, the heterodimer acts as both an ATP-dependent DNA helicase and an ATP-dependent, dual-direction single-stranded exonuclease. Recognizes the chi site generating a DNA molecule suitable for the initiation of homologous recombination. The AddB subunit has 5' -&gt; 3' nuclease activity but not helicase activity. The polypeptide is ATP-dependent helicase/deoxyribonuclease subunit B (Listeria innocua serovar 6a (strain ATCC BAA-680 / CLIP 11262)).